The chain runs to 676 residues: Double-stranded RNA-specific editase Adar (676 aa).

The segment at 1–51 (MKFDSRVMLNSANNNSPQHPVSAPSDINMNGYNRKLPQKRGYEMPKYSDPK) is disordered. A compositionally biased stretch (polar residues) spans 8 to 31 (MLNSANNNSPQHPVSAPSDINMNG). A compositionally biased stretch (basic and acidic residues) spans 40 to 51 (RGYEMPKYSDPK). DRBM domains follow at residues 61–127 (QPKN…SFIQ) and 197–272 (ITVD…SLCN). One can recognise an A to I editase domain in the interval 348–672 (SVSTGTKCVS…LKKPIEQDEF (325 aa)). His372 serves as a coordination point for Zn(2+). Catalysis depends on Glu374, which acts as the Proton donor. Positions 430 and 493 each coordinate Zn(2+).

In terms of tissue distribution, expressed in embryonic nervous system; late stage 13 sees ventral nerve cord expression which spreads to brain by stage 16. Expression is maintained through to adulthood.

In terms of biological role, has A-to-I RNA editing activity on extended dsRNA: edits RNA-binding protein Rnp4F. A-to-I editing of pre-mRNAs acts predominantly through nervous system targets to affect adult nervous system integrity, function and behavior. Essential for adaptation to environmental stresses, such as oxygen deprivation, and for the prevention of premature neuronal degeneration, through the editing of ion channels as targets. This chain is Double-stranded RNA-specific editase Adar, found in Drosophila melanogaster (Fruit fly).